Reading from the N-terminus, the 308-residue chain is Dipeptide transport system permease protein DppB (308 aa).

Helical transmembrane passes span 10 to 30 (WAMAATILVITTLTFVLMKVI), 59 to 79 (LIFQYIFYLKSIITFDFGPSI), 100 to 120 (LGMTAIVIAVISGLVLGVIAA), 131 to 151 (AMSLAVLGISIPNFILATLLI), 168 to 188 (SPIHMVLPTAALAVGPMAIIA), 228 to 248 (MPVITVLGTLVASILTGSFVI), and 278 to 298 (VFYSVILIIMLFLVDLAYGLL). The ABC transmembrane type-1 domain maps to 94–295 (FPVSFELGMT…IMLFLVDLAY (202 aa)).

The protein belongs to the binding-protein-dependent transport system permease family. OppBC subfamily.

It is found in the cell membrane. Functionally, probably part of the ABC transporter DppBCDE involved in dipeptide transport. Responsible for the translocation of the substrate across the membrane. The protein is Dipeptide transport system permease protein DppB (dppB) of Bacillus subtilis (strain 168).